The following is a 1119-amino-acid chain: Solute carrier family 38 member 10 (1119 aa).

The next 10 helical transmembrane spans lie at 4–24 (AAAS…GVSV), 36–58 (IVLG…MFLV), 84–104 (LVET…YVVI), 120–140 (VGGT…VLPL), 153–173 (FSAM…LSSL), 229–249 (IFAS…FFGY), 272–292 (MLRV…ILPC), 323–343 (ALTL…PNVE), 345–365 (ILGL…PALI), and 378–398 (VVLW…LSVS). Disordered regions lie at residues 438–691 (AEDG…EEAG) and 731–1071 (KEIH…DGVI). Composition is skewed to basic and acidic residues over residues 439–454 (EDGR…REEL), 466–475 (PGREDGKEAP), 493–522 (EAHR…ENKP), 544–559 (DSER…EVGK), and 592–603 (AKEDLGPGDRGL). Ser612 bears the Phosphoserine mark. The span at 652–667 (PPLPAEKPAPGPGLPP) shows a compositional bias: pro residues. Composition is skewed to basic and acidic residues over residues 668 to 677 (EPREQRDVER), 731 to 752 (KEIH…EVHQ), and 763 to 773 (EAPEGKARETV). A Phosphothreonine modification is found at Thr772. A Phosphoserine modification is found at Ser802. 2 stretches are compositionally biased toward basic and acidic residues: residues 832-841 (KLRDGQKDAA) and 863-876 (PARE…RLAE). Polar residues predominate over residues 880 to 889 (GQSQDVTGGS). Phosphoserine occurs at positions 889, 965, and 997. 3 stretches are compositionally biased toward basic and acidic residues: residues 975–1005 (HRLD…RGGE), 1012–1022 (PRQRPEPELGL), and 1033–1042 (DNAKPNRDLK).

Belongs to the amino acid/polyamine transporter 2 family.

It localises to the membrane. The enzyme catalyses L-glutamate(out) = L-glutamate(in). It carries out the reaction L-glutamine(out) = L-glutamine(in). The catalysed reaction is L-alanine(in) = L-alanine(out). It catalyses the reaction L-serine(in) = L-serine(out). The enzyme catalyses L-leucine(in) = L-leucine(out). Its function is as follows. Facilitates bidirectional transport of amino acids. May act as a glutamate sensor that regulates glutamate-glutamine cycle and mTOR signaling in the brain. The transport mechanism remains to be elucidated. The sequence is that of Solute carrier family 38 member 10 from Homo sapiens (Human).